A 261-amino-acid polypeptide reads, in one-letter code: Cytochrome c oxidase subunit 3 (261 aa).

Residues Met-1–Pro-15 are Mitochondrial matrix-facing. Residues Trp-16–Trp-34 traverse the membrane as a helical segment. The Mitochondrial intermembrane portion of the chain corresponds to Phe-35–Leu-40. The chain crosses the membrane as a helical span at residues Thr-41–Thr-66. At Phe-67 to Thr-72 the chain is on the mitochondrial matrix side. The chain crosses the membrane as a helical span at residues Pro-73–Ser-105. Residues Leu-106 to Glu-128 are Mitochondrial intermembrane-facing. The chain crosses the membrane as a helical span at residues Val-129–Met-152. Residues Glu-153 to Glu-155 lie on the Mitochondrial matrix side of the membrane. Residues Arg-156–Glu-183 form a helical membrane-spanning segment. At Ala-184 to Asp-190 the chain is on the mitochondrial intermembrane side. A helical membrane pass occupies residues Gly-191–Val-223. The Mitochondrial matrix portion of the chain corresponds to Gln-224–His-232. Residues Phe-233–Ile-256 traverse the membrane as a helical segment. Residues Tyr-257–Ser-261 are Mitochondrial intermembrane-facing.

It belongs to the cytochrome c oxidase subunit 3 family. As to quaternary structure, component of the cytochrome c oxidase (complex IV, CIV), a multisubunit enzyme composed of 14 subunits. The complex is composed of a catalytic core of 3 subunits MT-CO1, MT-CO2 and MT-CO3, encoded in the mitochondrial DNA, and 11 supernumerary subunits COX4I, COX5A, COX5B, COX6A, COX6B, COX6C, COX7A, COX7B, COX7C, COX8 and NDUFA4, which are encoded in the nuclear genome. The complex exists as a monomer or a dimer and forms supercomplexes (SCs) in the inner mitochondrial membrane with NADH-ubiquinone oxidoreductase (complex I, CI) and ubiquinol-cytochrome c oxidoreductase (cytochrome b-c1 complex, complex III, CIII), resulting in different assemblies (supercomplex SCI(1)III(2)IV(1) and megacomplex MCI(2)III(2)IV(2)).

It is found in the mitochondrion inner membrane. It carries out the reaction 4 Fe(II)-[cytochrome c] + O2 + 8 H(+)(in) = 4 Fe(III)-[cytochrome c] + 2 H2O + 4 H(+)(out). Component of the cytochrome c oxidase, the last enzyme in the mitochondrial electron transport chain which drives oxidative phosphorylation. The respiratory chain contains 3 multisubunit complexes succinate dehydrogenase (complex II, CII), ubiquinol-cytochrome c oxidoreductase (cytochrome b-c1 complex, complex III, CIII) and cytochrome c oxidase (complex IV, CIV), that cooperate to transfer electrons derived from NADH and succinate to molecular oxygen, creating an electrochemical gradient over the inner membrane that drives transmembrane transport and the ATP synthase. Cytochrome c oxidase is the component of the respiratory chain that catalyzes the reduction of oxygen to water. Electrons originating from reduced cytochrome c in the intermembrane space (IMS) are transferred via the dinuclear copper A center (CU(A)) of subunit 2 and heme A of subunit 1 to the active site in subunit 1, a binuclear center (BNC) formed by heme A3 and copper B (CU(B)). The BNC reduces molecular oxygen to 2 water molecules using 4 electrons from cytochrome c in the IMS and 4 protons from the mitochondrial matrix. This Oncorhynchus clarkii (Cutthroat trout) protein is Cytochrome c oxidase subunit 3 (mt-co3).